Reading from the N-terminus, the 396-residue chain is Phosphoglycerate kinase (396 aa).

Substrate is bound by residues 21 to 23, Arg-36, 59 to 62, Arg-118, and Arg-151; these read DLN and HFGR. ATP contacts are provided by residues Lys-201, Glu-323, and 353–356; that span reads GGDT.

This sequence belongs to the phosphoglycerate kinase family. In terms of assembly, monomer.

It localises to the cytoplasm. The enzyme catalyses (2R)-3-phosphoglycerate + ATP = (2R)-3-phospho-glyceroyl phosphate + ADP. It functions in the pathway carbohydrate degradation; glycolysis; pyruvate from D-glyceraldehyde 3-phosphate: step 2/5. The protein is Phosphoglycerate kinase of Brucella abortus biovar 1 (strain 9-941).